A 199-amino-acid chain; its full sequence is Small ribosomal subunit protein eS6 (199 aa).

Basic and acidic residues predominate over residues 172–183 (KEQREKRSESLA). Residues 172–199 (KEQREKRSESLAKKRSRLSAASKPSIAA) are disordered.

Belongs to the eukaryotic ribosomal protein eS6 family. Post-translationally, ribosomal protein S6 is the major substrate of protein kinases in eukaryote ribosomes.

In terms of biological role, component of the 40S small ribosomal subunit. Plays an important role in controlling cell growth and proliferation through the selective translation of particular classes of mRNA. This chain is Small ribosomal subunit protein eS6 (RPS6), found in Nicotiana tabacum (Common tobacco).